Here is a 377-residue protein sequence, read N- to C-terminus: Dihydroorotate dehydrogenase (quinone) (377 aa).

Residues 68 to 72 and threonine 92 contribute to the FMN site; that span reads AGFDK. Lysine 72 serves as a coordination point for substrate. 117–121 serves as a coordination point for substrate; that stretch reads NRMGF. FMN-binding residues include asparagine 149 and asparagine 182. A substrate-binding site is contributed by asparagine 182. Serine 185 functions as the Nucleophile in the catalytic mechanism. A substrate-binding site is contributed by asparagine 187. 2 residues coordinate FMN: lysine 224 and threonine 252. 253–254 contacts substrate; it reads NT. FMN contacts are provided by residues glycine 278, glycine 307, and 328 to 329; that span reads YT.

It belongs to the dihydroorotate dehydrogenase family. Type 2 subfamily. In terms of assembly, monomer. FMN serves as cofactor.

Its subcellular location is the cell membrane. It catalyses the reaction (S)-dihydroorotate + a quinone = orotate + a quinol. Its pathway is pyrimidine metabolism; UMP biosynthesis via de novo pathway; orotate from (S)-dihydroorotate (quinone route): step 1/1. Functionally, catalyzes the conversion of dihydroorotate to orotate with quinone as electron acceptor. The protein is Dihydroorotate dehydrogenase (quinone) of Thermobifida fusca (strain YX).